A 467-amino-acid polypeptide reads, in one-letter code: Membrane-bound lytic murein transglycosylase F (467 aa).

Positions 1 to 33 are cleaved as a signal peptide; sequence MTELFRHSKHLLASLALLSVLGLMLAMHPSPSA. The non-LT domain stretch occupies residues 34–266; sequence IERIMARGEL…KLEDRFYGHV (233 aa). An LT domain region spans residues 268–467; it reads QFNLYAARSF…RRDDTLIALN (200 aa). Glu313 is a catalytic residue.

In the N-terminal section; belongs to the bacterial solute-binding protein 3 family. The protein in the C-terminal section; belongs to the transglycosylase Slt family.

Its subcellular location is the cell outer membrane. It carries out the reaction Exolytic cleavage of the (1-&gt;4)-beta-glycosidic linkage between N-acetylmuramic acid (MurNAc) and N-acetylglucosamine (GlcNAc) residues in peptidoglycan, from either the reducing or the non-reducing ends of the peptidoglycan chains, with concomitant formation of a 1,6-anhydrobond in the MurNAc residue.. Functionally, murein-degrading enzyme that degrades murein glycan strands and insoluble, high-molecular weight murein sacculi, with the concomitant formation of a 1,6-anhydromuramoyl product. Lytic transglycosylases (LTs) play an integral role in the metabolism of the peptidoglycan (PG) sacculus. Their lytic action creates space within the PG sacculus to allow for its expansion as well as for the insertion of various structures such as secretion systems and flagella. The protein is Membrane-bound lytic murein transglycosylase F of Alcanivorax borkumensis (strain ATCC 700651 / DSM 11573 / NCIMB 13689 / SK2).